We begin with the raw amino-acid sequence, 322 residues long: Ferredoxin--NADP reductase (322 aa).

The FAD site is built by aspartate 34, glutamine 42, tyrosine 47, valine 87, phenylalanine 120, aspartate 279, and threonine 320.

Belongs to the ferredoxin--NADP reductase type 2 family. As to quaternary structure, homodimer. FAD is required as a cofactor.

It carries out the reaction 2 reduced [2Fe-2S]-[ferredoxin] + NADP(+) + H(+) = 2 oxidized [2Fe-2S]-[ferredoxin] + NADPH. This Streptococcus pneumoniae serotype 19F (strain G54) protein is Ferredoxin--NADP reductase.